Reading from the N-terminus, the 241-residue chain is Sugar fermentation stimulation protein homolog (241 aa).

The protein belongs to the SfsA family.

This chain is Sugar fermentation stimulation protein homolog, found in Jannaschia sp. (strain CCS1).